The sequence spans 685 residues: Bifunctional diguanylate cyclase/cyclic di-GMP phosphodiesterase MucR (685 aa).

The region spanning 6–199 (YNQVLVAFSL…YTGMAAAQFP (194 aa)) is the MHYT domain. The next 7 membrane-spanning stretches (helical) occupy residues 9 to 29 (VLVA…LDMA), 44 to 64 (LIGG…VGML), 77 to 97 (GLTL…LWLV), 117 to 137 (GIAA…GIVY), 141 to 161 (WLGL…WIAF), 175 to 195 (AGAA…GMAA), and 214 to 234 (GWLA…ALIV). At 235–685 (SVLDSRLEAR…PAEQLLASVA (451 aa)) the chain is on the cytoplasmic side. Residues 293–425 (RRFAVLFMDL…GRNGYCFFES (133 aa)) form the GGDEF domain. The region spanning 434–685 (QLQLLHDLRQ…PAEQLLASVA (252 aa)) is the EAL domain. Residues Gln455, Glu469, Leu472, Arg473, Asn528, and Gln533 each coordinate 3',3'-c-di-GMP. A Mg(2+)-binding site is contributed by Glu469. Asn528 serves as a coordination point for Mg(2+). Positions 560, 590, and 591 each coordinate Mg(2+). Asp590 contacts 3',3'-c-di-GMP. Arg614 contacts 3',3'-c-di-GMP. Glu647 contributes to the Mg(2+) binding site. 3',3'-c-di-GMP contacts are provided by Glu650 and Phe669.

In terms of assembly, homodimer. It depends on Mg(2+) as a cofactor.

It localises to the cell inner membrane. It carries out the reaction 2 GTP = 3',3'-c-di-GMP + 2 diphosphate. The catalysed reaction is 3',3'-c-di-GMP + H2O = 5'-phosphoguanylyl(3'-&gt;5')guanosine + H(+). Displays both diguanylate cyclase (DGC) and c-di-GMP-specific phosphodiesterase (PDE) activity. Probably modulates DGC and PDE activities, and thus c-di-GMP levels, in a growth mode-dependent manner. May act as a PDE under planktonic growth conditions and as a DGC in biofilms. During biofilm formation, it specifically activates alginate biosynthesis via generation of a localized c-di-GMP pool in the vicinity of the alginate biosynthesis protein Alg44. In Pseudomonas aeruginosa (strain ATCC 15692 / DSM 22644 / CIP 104116 / JCM 14847 / LMG 12228 / 1C / PRS 101 / PAO1), this protein is Bifunctional diguanylate cyclase/cyclic di-GMP phosphodiesterase MucR.